The chain runs to 509 residues: ATP synthase subunit alpha (509 aa).

169-176 (GDRQTGKT) is an ATP binding site.

This sequence belongs to the ATPase alpha/beta chains family. As to quaternary structure, F-type ATPases have 2 components, CF(1) - the catalytic core - and CF(0) - the membrane proton channel. CF(1) has five subunits: alpha(3), beta(3), gamma(1), delta(1), epsilon(1). CF(0) has four main subunits: a(1), b(1), b'(1) and c(9-12).

Its subcellular location is the cell inner membrane. The enzyme catalyses ATP + H2O + 4 H(+)(in) = ADP + phosphate + 5 H(+)(out). Produces ATP from ADP in the presence of a proton gradient across the membrane. The alpha chain is a regulatory subunit. This chain is ATP synthase subunit alpha, found in Bradyrhizobium sp. (strain ORS 278).